The primary structure comprises 105 residues: uncharacterized protein (105 aa).

A helical membrane pass occupies residues 13–35 (LLFAFVVVIVVLTLSYVYAQNII).

It localises to the membrane. This is an uncharacterized protein from Archaeoglobus fulgidus (strain ATCC 49558 / DSM 4304 / JCM 9628 / NBRC 100126 / VC-16).